The sequence spans 310 residues: UPF0282 protein PF0593 (310 aa).

The protein belongs to the UPF0282 family.

In Pyrococcus furiosus (strain ATCC 43587 / DSM 3638 / JCM 8422 / Vc1), this protein is UPF0282 protein PF0593.